Here is a 362-residue protein sequence, read N- to C-terminus: Aspartate-semialdehyde dehydrogenase (362 aa).

NADP(+) is bound by residues Thr-15, Gly-16, Ala-17, Val-18, Ser-40, Ser-43, Leu-87, and Asp-88. Cys-154 functions as the Acyl-thioester intermediate in the catalytic mechanism. Gly-186 contacts NADP(+). The active-site Proton acceptor is the His-251. Residue Asn-340 coordinates NADP(+).

The protein belongs to the aspartate-semialdehyde dehydrogenase family. Homotetramer; dimer of dimers.

The protein resides in the cytoplasm. Its subcellular location is the cytosol. The protein localises to the nucleus. The enzyme catalyses L-aspartate 4-semialdehyde + phosphate + NADP(+) = 4-phospho-L-aspartate + NADPH + H(+). It participates in amino-acid biosynthesis; L-methionine biosynthesis via de novo pathway; L-homoserine from L-aspartate: step 2/3. Its pathway is amino-acid biosynthesis; L-threonine biosynthesis; L-threonine from L-aspartate: step 2/5. Functionally, catalyzes the NADPH-dependent formation of L-aspartate 4-semialdehyde (L-ASA) by the reductive dephosphorylation of 4-phospho-L-aspartate. Mediates the second step in the biosynthesis of amino acids that derive from aspartate (the aspartate family of amino acids), including methioinine and threonine, the latter of which is a precursor to isoleucine. The polypeptide is Aspartate-semialdehyde dehydrogenase (Trichophyton rubrum (strain ATCC MYA-4607 / CBS 118892) (Athlete's foot fungus)).